Consider the following 86-residue polypeptide: Small ribosomal subunit protein bS18c (86 aa).

It belongs to the bacterial ribosomal protein bS18 family. Part of the 30S ribosomal subunit.

It localises to the plastid. Its subcellular location is the chloroplast. The sequence is that of Small ribosomal subunit protein bS18c from Pseudotsuga menziesii (Douglas-fir).